A 51-amino-acid polypeptide reads, in one-letter code: Insulin (51 aa).

Cystine bridges form between Cys7/Cys37, Cys19/Cys50, and Cys36/Cys41.

Belongs to the insulin family. Heterodimer of a B chain and an A chain linked by two disulfide bonds.

It is found in the secreted. Insulin decreases blood glucose concentration. It increases cell permeability to monosaccharides, amino acids and fatty acids. It accelerates glycolysis, the pentose phosphate cycle, and glycogen synthesis in liver. This is Insulin (INS) from Didelphis virginiana (North American opossum).